We begin with the raw amino-acid sequence, 50 residues long: Defensin D1 (50 aa).

Intrachain disulfides connect cysteine 3–cysteine 50, cysteine 14–cysteine 35, cysteine 20–cysteine 44, and cysteine 24–cysteine 46.

In terms of processing, contains 4 disulfide bonds.

It is found in the secreted. In terms of biological role, antimicrobial peptide active against fungi, Gram-positive and Gram-negative bacteria. Inhibits growth of hyphae in the fungi A.niger (IC(50)=3.5 ug/ml), B.sorokiniana (IC(50)=3.0 ug/ml), F.oxysporum (IC(50)=9.5 ug/ml), F.graminearum (IC(50)=6.9 ug/ml), F.culmorum (IC(50)=6.9 ug/ml) and B.cinerea (IC(50)=27.4 ug/ml). Has no effect on spore germination. Destroys spores in germinated conidia by disruption of cell walls and membranes in A.niger and B.sorokiniana. Causes vacuolization of germinated macro- and microconidia in F.oxysporum, F.graminearum and F.culmorum. Strongly inhibits growth of P.infestans on potato tubers above concentrations of 13.6 ug/ml. Inhibits growth of Gram-positive bacteria C.michiganensis and B.subtilis and of Gram-negative bacteria P.syringae, E.carotovora and E.coli. The polypeptide is Defensin D1 (Nigella sativa (Black cumin)).